We begin with the raw amino-acid sequence, 233 residues long: Small ribosomal subunit protein uS3 (233 aa).

The KH type-2 domain maps to 39-107 (VREFLKKRLG…PVHVNIEEVR (69 aa)). The segment at 212–233 (VQATPAAPEKKMRKGARNAAAN) is disordered.

It belongs to the universal ribosomal protein uS3 family. In terms of assembly, part of the 30S ribosomal subunit. Forms a tight complex with proteins S10 and S14.

Binds the lower part of the 30S subunit head. Binds mRNA in the 70S ribosome, positioning it for translation. The polypeptide is Small ribosomal subunit protein uS3 (Chromobacterium violaceum (strain ATCC 12472 / DSM 30191 / JCM 1249 / CCUG 213 / NBRC 12614 / NCIMB 9131 / NCTC 9757 / MK)).